We begin with the raw amino-acid sequence, 205 residues long: Small ribosomal subunit protein uS4 (205 aa).

The S4 RNA-binding domain maps to 95-156 (SRLDNIVYRM…KTIKIPIVKA (62 aa)).

It belongs to the universal ribosomal protein uS4 family. Part of the 30S ribosomal subunit. Contacts protein S5. The interaction surface between S4 and S5 is involved in control of translational fidelity.

In terms of biological role, one of the primary rRNA binding proteins, it binds directly to 16S rRNA where it nucleates assembly of the body of the 30S subunit. Functionally, with S5 and S12 plays an important role in translational accuracy. The sequence is that of Small ribosomal subunit protein uS4 from Mycoplasma pneumoniae (strain ATCC 29342 / M129 / Subtype 1) (Mycoplasmoides pneumoniae).